The following is a 359-amino-acid chain: Small ribosomal subunit biogenesis GTPase RsgA (359 aa).

Positions 101–259 constitute a CP-type G domain; it reads KRKGSQAIAS…LMDNPGIREV (159 aa). GTP is bound by residues 149-152 and 201-209; these read NKKD and GSSGAGKST. Zn(2+) is bound by residues Cys284, Cys289, His291, and Cys297. The disordered stretch occupies residues 331-359; it reads DPEEARKKKQKDKQMSKALQKRLKDKGRK. Over residues 349–359 the composition is skewed to basic residues; the sequence is LQKRLKDKGRK.

This sequence belongs to the TRAFAC class YlqF/YawG GTPase family. RsgA subfamily. Monomer. Associates with 30S ribosomal subunit, binds 16S rRNA. Zn(2+) is required as a cofactor.

It localises to the cytoplasm. Functionally, one of several proteins that assist in the late maturation steps of the functional core of the 30S ribosomal subunit. Helps release RbfA from mature subunits. May play a role in the assembly of ribosomal proteins into the subunit. Circularly permuted GTPase that catalyzes slow GTP hydrolysis, GTPase activity is stimulated by the 30S ribosomal subunit. The polypeptide is Small ribosomal subunit biogenesis GTPase RsgA (Leptospira interrogans serogroup Icterohaemorrhagiae serovar Lai (strain 56601)).